Reading from the N-terminus, the 349-residue chain is Deoxyguanosinetriphosphate triphosphohydrolase-like protein (349 aa).

Residues 80-197 (RLTHTLEVAQ…VKYSDKIAYV (118 aa)) enclose the HD domain.

It belongs to the dGTPase family. Type 2 subfamily.

This chain is Deoxyguanosinetriphosphate triphosphohydrolase-like protein, found in Clostridium tetani (strain Massachusetts / E88).